Consider the following 414-residue polypeptide: Diaminopimelate decarboxylase (414 aa).

Lys-52 carries the N6-(pyridoxal phosphate)lysine modification. Residues Gly-231 and 265 to 268 contribute to the pyridoxal 5'-phosphate site; that span reads EPGR. Substrate-binding residues include Arg-268, Arg-304, and Tyr-308. The Proton donor role is filled by Cys-334. Substrate contacts are provided by Glu-335 and Tyr-362. Position 362 (Tyr-362) interacts with pyridoxal 5'-phosphate.

This sequence belongs to the Orn/Lys/Arg decarboxylase class-II family. LysA subfamily. Homodimer. The cofactor is pyridoxal 5'-phosphate.

The enzyme catalyses meso-2,6-diaminopimelate + H(+) = L-lysine + CO2. It functions in the pathway amino-acid biosynthesis; L-lysine biosynthesis via DAP pathway; L-lysine from DL-2,6-diaminopimelate: step 1/1. In terms of biological role, specifically catalyzes the decarboxylation of meso-diaminopimelate (meso-DAP) to L-lysine. This is Diaminopimelate decarboxylase from Neisseria meningitidis serogroup B (strain ATCC BAA-335 / MC58).